Reading from the N-terminus, the 429-residue chain is Formate-dependent phosphoribosylglycinamide formyltransferase (429 aa).

N(1)-(5-phospho-beta-D-ribosyl)glycinamide contacts are provided by residues 26 to 27 (EL) and Glu86. Residues Arg118, Lys159, 199–202 (EEHI), and Glu207 contribute to the ATP site. An ATP-grasp domain is found at 123 to 319 (ETLVKEAKVP…EFGLHLRAVL (197 aa)). Positions 276 and 288 each coordinate Mg(2+). Residues Asp295, Lys375, and 382 to 383 (RR) each bind N(1)-(5-phospho-beta-D-ribosyl)glycinamide.

It belongs to the PurK/PurT family. As to quaternary structure, homodimer.

It carries out the reaction N(1)-(5-phospho-beta-D-ribosyl)glycinamide + formate + ATP = N(2)-formyl-N(1)-(5-phospho-beta-D-ribosyl)glycinamide + ADP + phosphate + H(+). It functions in the pathway purine metabolism; IMP biosynthesis via de novo pathway; N(2)-formyl-N(1)-(5-phospho-D-ribosyl)glycinamide from N(1)-(5-phospho-D-ribosyl)glycinamide (formate route): step 1/1. In terms of biological role, involved in the de novo purine biosynthesis. Catalyzes the transfer of formate to 5-phospho-ribosyl-glycinamide (GAR), producing 5-phospho-ribosyl-N-formylglycinamide (FGAR). Formate is provided by PurU via hydrolysis of 10-formyl-tetrahydrofolate. This chain is Formate-dependent phosphoribosylglycinamide formyltransferase, found in Pyrococcus abyssi (strain GE5 / Orsay).